The sequence spans 247 residues: Aspartate/glutamate leucyltransferase (247 aa).

Belongs to the R-transferase family. Bpt subfamily.

It is found in the cytoplasm. The enzyme catalyses N-terminal L-glutamyl-[protein] + L-leucyl-tRNA(Leu) = N-terminal L-leucyl-L-glutamyl-[protein] + tRNA(Leu) + H(+). It catalyses the reaction N-terminal L-aspartyl-[protein] + L-leucyl-tRNA(Leu) = N-terminal L-leucyl-L-aspartyl-[protein] + tRNA(Leu) + H(+). Functionally, functions in the N-end rule pathway of protein degradation where it conjugates Leu from its aminoacyl-tRNA to the N-termini of proteins containing an N-terminal aspartate or glutamate. This chain is Aspartate/glutamate leucyltransferase, found in Dechloromonas aromatica (strain RCB).